A 556-amino-acid polypeptide reads, in one-letter code: Glutamine--tRNA ligase (556 aa).

A 'HIGH' region motif is present at residues 34 to 44; it reads PEPNGYLHIGH. Residues 35 to 37 and 41 to 47 contribute to the ATP site; these read EPN and HIGHAKS. Positions 67 and 212 each coordinate L-glutamine. ATP contacts are provided by residues threonine 231, 261–262, and 269–271; these read RL and MSK. Positions 268-272 match the 'KMSKS' region motif; the sequence is IMSKR.

It belongs to the class-I aminoacyl-tRNA synthetase family. As to quaternary structure, monomer.

The protein localises to the cytoplasm. The enzyme catalyses tRNA(Gln) + L-glutamine + ATP = L-glutaminyl-tRNA(Gln) + AMP + diphosphate. The protein is Glutamine--tRNA ligase of Sodalis glossinidius (strain morsitans).